Consider the following 165-residue polypeptide: Ureidoglycolate lyase (165 aa).

Belongs to the ureidoglycolate lyase family. As to quaternary structure, homodimer. Ni(2+) is required as a cofactor.

It carries out the reaction (S)-ureidoglycolate = urea + glyoxylate. Its pathway is nitrogen metabolism; (S)-allantoin degradation. Its function is as follows. Catalyzes the catabolism of the allantoin degradation intermediate (S)-ureidoglycolate, generating urea and glyoxylate. Involved in the utilization of allantoin as nitrogen source. This Chelativorans sp. (strain BNC1) protein is Ureidoglycolate lyase.